A 512-amino-acid polypeptide reads, in one-letter code: MLFQDLSFPAAVGAAFGAFAIYVVARCIYDLFFHPLRNFPGPKRAAIWSFYEFYYDVIKDGTYLWEIEKMHQRYGPIVRINSRSLHIHDPEYFSTIYAGSGRKVNKELSAVSGYTFPHSTISTLEHDLHRKRRAIVNPYFSKRAIADVEPVIHERLDTLISRLAEAKGNTVDLTCAFSAFTADVVTYHFYGSHANYIGSKDFKYGLKDALTVLLNLYNLTRFLPVPPTTIKNLPLPILGLINPNFPLVVSAREANKKMVLNYLDKPDEEKKAMKDARSKSVIVSALADSNVPDEEKTLDRLLDEGETIIFAGIDTTARTLAVALFHLLNNQDVLMKLRKELQTIAKSDGQQWTTTELEAVPYMRGVVQEAIRLAYGLVVRIPRISPHEALQYNGFVIPPGTPVSQSTYLVNNDASVFPNPQVFDPERWVKAAQDGTNLDKYMVSFSKGSRACLGINLAYAKLYLGIARVATSLDMELFETTRADIGVYHTRGFAFPKEGDGSVKARVRGLCK.

The helical transmembrane segment at 6-29 threads the bilayer; sequence LSFPAAVGAAFGAFAIYVVARCIY. Cys-452 serves as a coordination point for heme.

The protein belongs to the cytochrome P450 family. The cofactor is heme.

The protein resides in the membrane. It functions in the pathway secondary metabolite biosynthesis; terpenoid biosynthesis. Functionally, cytochrome P450 monooxygenase; part of the gene cluster that mediates the biosynthesis of the sesquiterpenoid aspterric acid (AA), an inhibitor of dihydroxy-acid dehydratase (DHAD) effective as an herbicide. PbrB catalyzes the second step within the pathway and converts (-)-daucane produced by the terpene cyclase pbrA into an alpha-epoxy carboxylate intermediate which is further converted into the tricyclic aspterric acid by the cytochrome P450 monooxygenase pbrC. In Penicillium brasilianum, this protein is Cytochrome P450 monooxygenase pbrB.